A 637-amino-acid polypeptide reads, in one-letter code: Phosphomethylpyrimidine synthase (637 aa).

Residues asparagine 242, methionine 271, tyrosine 300, histidine 336, serine 356–glycine 358, aspartate 397–arginine 400, and glutamate 436 contribute to the substrate site. Residue histidine 440 participates in Zn(2+) binding. Tyrosine 463 contributes to the substrate binding site. Histidine 504 contacts Zn(2+). Residues cysteine 584, cysteine 587, and cysteine 592 each coordinate [4Fe-4S] cluster.

This sequence belongs to the ThiC family. Homodimer. Requires [4Fe-4S] cluster as cofactor.

It carries out the reaction 5-amino-1-(5-phospho-beta-D-ribosyl)imidazole + S-adenosyl-L-methionine = 4-amino-2-methyl-5-(phosphooxymethyl)pyrimidine + CO + 5'-deoxyadenosine + formate + L-methionine + 3 H(+). It participates in cofactor biosynthesis; thiamine diphosphate biosynthesis. Functionally, catalyzes the synthesis of the hydroxymethylpyrimidine phosphate (HMP-P) moiety of thiamine from aminoimidazole ribotide (AIR) in a radical S-adenosyl-L-methionine (SAM)-dependent reaction. This is Phosphomethylpyrimidine synthase from Janthinobacterium sp. (strain Marseille) (Minibacterium massiliensis).